A 176-amino-acid chain; its full sequence is ATP synthase subunit b (176 aa).

A helical membrane pass occupies residues Val-26–Gly-45.

It belongs to the ATPase B chain family. F-type ATPases have 2 components, F(1) - the catalytic core - and F(0) - the membrane proton channel. F(1) has five subunits: alpha(3), beta(3), gamma(1), delta(1), epsilon(1). F(0) has four main subunits: a(1), b(1), b'(1) and c(10-14). The alpha and beta chains form an alternating ring which encloses part of the gamma chain. F(1) is attached to F(0) by a central stalk formed by the gamma and epsilon chains, while a peripheral stalk is formed by the delta, b and b' chains.

The protein localises to the cellular thylakoid membrane. In terms of biological role, f(1)F(0) ATP synthase produces ATP from ADP in the presence of a proton or sodium gradient. F-type ATPases consist of two structural domains, F(1) containing the extramembraneous catalytic core and F(0) containing the membrane proton channel, linked together by a central stalk and a peripheral stalk. During catalysis, ATP synthesis in the catalytic domain of F(1) is coupled via a rotary mechanism of the central stalk subunits to proton translocation. Its function is as follows. Component of the F(0) channel, it forms part of the peripheral stalk, linking F(1) to F(0). This Synechococcus sp. (strain PCC 6716) protein is ATP synthase subunit b.